The sequence spans 875 residues: Cytosolic phospholipase A2 epsilon (875 aa).

A disordered region spans residues 16–70 (THASEGHHGLGTSMLVPKNPQGEEDSKLGRNCSGFEDAQDPQTAVPSSPLLSMAS). A C2 domain is found at 60 to 183 (VPSSPLLSMA…CLRNKTHVKF (124 aa)). Residues 61–70 (PSSPLLSMAS) are compositionally biased toward low complexity. 5 residues coordinate Ca(2+): Asp97, Asp103, Asp153, Asp155, and Asp161. The 544-residue stretch at 332 to 875 (PCSDTLDVRL…KKRMRSQCPS (544 aa)) folds into the PLA2c domain. Residue Ser420 is the Nucleophile of the active site. Asp708 functions as the Proton acceptor in the catalytic mechanism. A Phosphoserine modification is found at Ser808. Residues 865–875 (EKKRMRSQCPS) form a required for localization at membrane structures region.

Ca(2+) is required as a cofactor. Predominantly expressed in brain, heart, skeletal muscle, testis and thyroid. Expressed in neurons but not astrocytes or microglia. Expressed at lower level in stomach.

The protein resides in the cytoplasm. Its subcellular location is the cytosol. It is found in the early endosome membrane. The protein localises to the lysosome membrane. It localises to the cell membrane. The enzyme catalyses a 1,2-diacyl-sn-glycero-3-phosphoethanolamine + a 1,2-diacyl-sn-glycero-3-phosphocholine = an N-acyl-1,2-diacyl-sn-glycero-3-phosphoethanolamine + a 2-acyl-sn-glycero-3-phosphocholine + H(+). The catalysed reaction is 1-hexadecanoyl-2-octadecanoyl-sn-glycero-3-phosphocholine + 1,2-di-(9Z-octadecenoyl)-sn-glycero-3-phosphoethanolamine = 2-octadecanoyl-sn-glycero-3-phosphocholine + N-hexadecanoyl-1,2-di-(9Z-octadecenoyl)-sn-glycero-3-phosphoethanolamine + H(+). It carries out the reaction 1-octadecanoyl-2-hexadecanoyl-sn-glycero-3-phosphocholine + 1,2-di-(9Z-octadecenoyl)-sn-glycero-3-phosphoethanolamine = N-octadecanoyl-1,2-di-(9Z-octadecenoyl)-sn-glycero-3-phosphoethanolamine + 2-hexadecanoyl-sn-glycero-3-phosphocholine + H(+). It catalyses the reaction 1,2-di-(9Z-octadecenoyl)-sn-glycero-3-phosphoethanolamine + 1,2-dihexadecanoyl-sn-glycero-3-phosphocholine = N-hexadecanoyl-1,2-di-(9Z-octadecenoyl)-sn-glycero-3-phosphoethanolamine + 2-hexadecanoyl-sn-glycero-3-phosphocholine + H(+). The enzyme catalyses 1,2-di-(5Z,8Z,11Z,14Z-eicosatetraenoyl)-sn-glycero-3-phosphocholine + 1,2-di-(9Z-octadecenoyl)-sn-glycero-3-phosphoethanolamine = N-(5Z,8Z,11Z,14Z-eicosatetraenoyl)-1,2-di-(9Z-octadecenoyl)-sn-glycero-3-phosphoethanolamine + 2-(5Z,8Z,11Z,14Z)-eicosatetraenoyl-sn-glycero-3-phosphocholine + H(+). The catalysed reaction is 2 1,2-di-(9Z-octadecenoyl)-sn-glycero-3-phosphoethanolamine = N,1,2-tri-(9Z-octadecenoyl)-sn-glycero-3-phosphoethanolamine + 2-(9Z-octadecenoyl)-sn-glycero-3-phosphoethanolamine + H(+). It carries out the reaction a 1,2-diacyl-sn-glycero-3-phosphocholine + H2O = a 1-acyl-sn-glycero-3-phosphocholine + a fatty acid + H(+). It catalyses the reaction 1-(1Z-octadecenyl)-2-(9Z-octadecenoyl)-sn-glycero-3-phosphoethanolamine + 1,2-dihexadecanoyl-sn-glycero-3-phosphocholine = 1-O-(1Z-octadecenoyl)-2-(9Z-octadecenoyl)-sn-glycero-3-phospho-N-hexadecanoyl-ethanolamine + 2-hexadecanoyl-sn-glycero-3-phosphocholine + H(+). The enzyme catalyses 1-hexadecanoyl-2-(5Z,8Z,11Z,14Z-eicosatetraenoyl)-sn-glycero-3-phosphocholine + H2O = 1-hexadecanoyl-sn-glycero-3-phosphocholine + (5Z,8Z,11Z,14Z)-eicosatetraenoate + H(+). The catalysed reaction is 1-hexadecanoyl-sn-glycero-3-phosphocholine + H2O = sn-glycerol 3-phosphocholine + hexadecanoate + H(+). Its activity is regulated as follows. Stimulated by cytosolic Ca(2+). Stimulated by anionic phospholipids such as phosphatidylserine. Calcium-dependent N-acyltransferase involved in the biosynthesis of N-acyl ethanolamines (NAEs) in the brain. Transfers the sn-1 fatty acyl chain of phosphatidylcholine (fatty acyl donor) to the amine group of phosphatidylethanolamine (fatty acyl acceptor) to generate N-acyl phosphatidylethanolamine (NAPE). Similarly can use plasmenylethanolamine as a fatty acyl acceptor to form N-acyl plasmenylethanolamine (N-Acyl-PlsEt). Both NAPE and N-Acyl-PlsEt can serve as precursors of bioactive NAEs like N-arachidonoyl phosphatidylethanolamine also called anandamide. Has weak phospholipase A2 and lysophospholipase activities. Regulates intracellular membrane trafficking that requires modulation of membrane curvature as it occurs by enrichment in lysophospholipids. Promotes tubule formation involved in clathrin-independent endocytotic trafficking and cargo recycling. The polypeptide is Cytosolic phospholipase A2 epsilon (Pla2g4e) (Mus musculus (Mouse)).